The chain runs to 617 residues: MPALRSRTTTHGRNMAGARALWRATGMTDDDFGKPIVAIANSFTQFVPGHVHLRDLGKIVADAVAGSGGVAKEFNTIAVDDGIAMGHGGMLYSLPSREIIADSVEYMVNAHCADALVCISNCDKITPGMLIAALRLNIPTVFVSGGAMESGHAVVTGGIVRSRLDLIDAMTAAVNPDVSDADLDTIERSACPTCGSCSGMFTANSMNCLTEALGLALPGNGSTLATAAARRGLFVEAGRLVVDLARRYYEKDDEAVLPRSIASAAAFRNAFAVDVAMGGSTNTVLHLLAAAVEAGVEVTLDDIDQVSRSVACLCKVAPSSTDYYMEDVHRAGGIPAILGELDRGGLVDPNVHSVHAASLREFLDRWDVRGADPSPDAIELFHAAPGGVRTVEPFGSTNRWDTLDTDAKNGCIRSVEHAYSADGGLAVLRGNLAPDGAVVKTAGVDESQWTFRGPALVVESQEAAVDAILNKVVKAGDVIIVRYEGPRGGPGMQEMLYPTAFLKGRGLGPKCALITDGRFSGGSSGLSIGHVSPEAAHGGPIALVRDGDLVEIDIPRRRIDLLVPDAELAARRAEIEANGGYHPANRERVVSAALRAYAAMATSASTGAARDVRLITG.

A Mg(2+)-binding site is contributed by aspartate 81. Cysteine 122 is a [2Fe-2S] cluster binding site. Residues aspartate 123 and lysine 124 each contribute to the Mg(2+) site. Residue lysine 124 is modified to N6-carboxylysine. Position 197 (cysteine 197) interacts with [2Fe-2S] cluster. Glutamate 494 contributes to the Mg(2+) binding site. Residue serine 520 is the Proton acceptor of the active site.

Belongs to the IlvD/Edd family. As to quaternary structure, homodimer. The cofactor is [2Fe-2S] cluster. Mg(2+) is required as a cofactor.

The catalysed reaction is (2R)-2,3-dihydroxy-3-methylbutanoate = 3-methyl-2-oxobutanoate + H2O. It carries out the reaction (2R,3R)-2,3-dihydroxy-3-methylpentanoate = (S)-3-methyl-2-oxopentanoate + H2O. It participates in amino-acid biosynthesis; L-isoleucine biosynthesis; L-isoleucine from 2-oxobutanoate: step 3/4. Its pathway is amino-acid biosynthesis; L-valine biosynthesis; L-valine from pyruvate: step 3/4. In terms of biological role, functions in the biosynthesis of branched-chain amino acids. Catalyzes the dehydration of (2R,3R)-2,3-dihydroxy-3-methylpentanoate (2,3-dihydroxy-3-methylvalerate) into 2-oxo-3-methylpentanoate (2-oxo-3-methylvalerate) and of (2R)-2,3-dihydroxy-3-methylbutanoate (2,3-dihydroxyisovalerate) into 2-oxo-3-methylbutanoate (2-oxoisovalerate), the penultimate precursor to L-isoleucine and L-valine, respectively. In Parafrankia sp. (strain EAN1pec), this protein is Dihydroxy-acid dehydratase.